We begin with the raw amino-acid sequence, 103 residues long: Defensin-like protein 268 (103 aa).

Residues 1–24 form the signal peptide; the sequence is MARLIFHFVFALILAAYLLSVTDA. 4 cysteine pairs are disulfide-bonded: cysteine 44–cysteine 103, cysteine 68–cysteine 87, cysteine 74–cysteine 98, and cysteine 78–cysteine 100.

Belongs to the DEFL family.

The protein localises to the secreted. The polypeptide is Defensin-like protein 268 (Arabidopsis thaliana (Mouse-ear cress)).